We begin with the raw amino-acid sequence, 1300 residues long: Serine protease EspP (1300 aa).

A signal peptide spans 1–55 (MNKIYSLKYSHITGGLIAVSELSGRVSSRATGKKKHKRILALCFLGLLQSSYSFA). The Peptidase S6 domain occupies 57–311 (QMDISNFYIR…NQTTIDNLKN (255 aa)). Active-site charge relay system residues include His-127, Asp-156, and Ser-263. The 267-residue stretch at 1034 to 1300 (DINGEAGAWA…AVNANFRYSF (267 aa)) folds into the Autotransporter domain.

Post-translationally, cleaved to release the mature protein from the outer membrane.

Its subcellular location is the periplasm. It is found in the secreted. It localises to the cell surface. The protein localises to the cell outer membrane. Its function is as follows. Serine protease with cytotoxic effect. Disrupts actin cytoskeleton resulting cell detachment in vitro. The chain is Serine protease EspP (espP) from Escherichia coli.